The sequence spans 425 residues: Monoacylglycerol lipase ABHD2 (425 aa).

The Cytoplasmic segment spans residues 1–9 (MNAMLETPE). A helical; Signal-anchor for type II membrane protein membrane pass occupies residues 10-30 (LPAVFDGVKLAAVAAVLYVIV). The Extracellular segment spans residues 31-425 (RCLNLKSPTA…DTEQVEADLE (395 aa)). The AB hydrolase-1 domain occupies 128–382 (MVICPGIANH…HGGHLGFFEG (255 aa)). Asn-136 is a glycosylation site (N-linked (GlcNAc...) asparagine). Catalysis depends on Ser-207, which acts as the Nucleophile. Catalysis depends on charge relay system residues Asp-345 and His-376. Residue Asn-410 is glycosylated (N-linked (GlcNAc...) asparagine).

Belongs to the AB hydrolase superfamily. AB hydrolase 4 family.

The protein localises to the cell membrane. The catalysed reaction is Hydrolyzes glycerol monoesters of long-chain fatty acids.. It carries out the reaction an acetyl ester + H2O = an aliphatic alcohol + acetate + H(+). It catalyses the reaction a triacylglycerol + H2O = a diacylglycerol + a fatty acid + H(+). The enzyme catalyses 2-(5Z,8Z,11Z,14Z-eicosatetraenoyl)-glycerol + H2O = glycerol + (5Z,8Z,11Z,14Z)-eicosatetraenoate + H(+). The catalysed reaction is a butanoate ester + H2O = an aliphatic alcohol + butanoate + H(+). It carries out the reaction hexadecanoate ester + H2O = an aliphatic alcohol + hexadecanoate + H(+). Its activity is regulated as follows. Acylglycerol lipase activity is activated upon binding to progesterone. Progesterone-dependent acylglycerol lipase that catalyzes hydrolysis of endocannabinoid arachidonoylglycerol (AG) from cell membrane. Acts as a progesterone receptor: progesterone-binding activates the acylglycerol lipase activity, mediating degradation of 1-arachidonoylglycerol (1AG) and 2-arachidonoylglycerol (2AG) to glycerol and arachidonic acid (AA). Also displays an ester hydrolase activity against acetyl ester, butanoate ester and hexadecanoate ester. Plays a key role in sperm capacitation in response to progesterone by mediating degradation of 2AG, an inhibitor of the sperm calcium channel CatSper, leading to calcium influx via CatSper and sperm activation. May also play a role in smooth muscle cells migration. The sequence is that of Monoacylglycerol lipase ABHD2 (ABHD2) from Macaca fascicularis (Crab-eating macaque).